The sequence spans 429 residues: 4-hydroxyphenylacetate degradation bifunctional isomerase/decarboxylase (429 aa).

2 Approximate repeats span residues 1–215 and 216–429; these read MKGT…RKSF and PTLP…ETAK. 3 residues coordinate a divalent metal cation: glutamate 276, glutamate 278, and aspartate 307.

The protein belongs to the FAH family. As to quaternary structure, monomer. It depends on Mg(2+) as a cofactor.

The enzyme catalyses (2E,4Z)-5-hydroxypenta-2,4-diene-1,2,5-tricarboxylate = (3E,5R)-5-carboxy-2-oxohept-3-enedioate. It carries out the reaction (3E,5R)-5-carboxy-2-oxohept-3-enedioate + H(+) = (4Z)-2-oxohept-4-enedioate + CO2. It participates in aromatic compound metabolism; 4-hydroxyphenylacetate degradation; pyruvate and succinate semialdehyde from 4-hydroxyphenylacetate: step 4/7. Its pathway is aromatic compound metabolism; 4-hydroxyphenylacetate degradation; pyruvate and succinate semialdehyde from 4-hydroxyphenylacetate: step 5/7. In terms of biological role, decarboxylates OPET (5-oxo-pent-3-ene-1,2,5-tricarboxylic acid) into HHDD (2-hydroxy-hept-2,4-diene-1,7-dioate) and isomerizes it to OHED (2-oxo-hept-3-ene-1,7-dioate). This is 4-hydroxyphenylacetate degradation bifunctional isomerase/decarboxylase (hpaG) from Escherichia coli.